Reading from the N-terminus, the 229-residue chain is Leucyl/phenylalanyl-tRNA--protein transferase (229 aa).

Belongs to the L/F-transferase family.

It localises to the cytoplasm. It carries out the reaction N-terminal L-lysyl-[protein] + L-leucyl-tRNA(Leu) = N-terminal L-leucyl-L-lysyl-[protein] + tRNA(Leu) + H(+). The catalysed reaction is N-terminal L-arginyl-[protein] + L-leucyl-tRNA(Leu) = N-terminal L-leucyl-L-arginyl-[protein] + tRNA(Leu) + H(+). The enzyme catalyses L-phenylalanyl-tRNA(Phe) + an N-terminal L-alpha-aminoacyl-[protein] = an N-terminal L-phenylalanyl-L-alpha-aminoacyl-[protein] + tRNA(Phe). Functions in the N-end rule pathway of protein degradation where it conjugates Leu, Phe and, less efficiently, Met from aminoacyl-tRNAs to the N-termini of proteins containing an N-terminal arginine or lysine. The sequence is that of Leucyl/phenylalanyl-tRNA--protein transferase from Pseudomonas syringae pv. syringae (strain B728a).